A 225-amino-acid chain; its full sequence is ATP-dependent dethiobiotin synthetase BioD (225 aa).

ATP is bound at residue 12-17; it reads GVGKTV. Mg(2+) is bound at residue threonine 16. The active site involves lysine 37. Residue threonine 41 participates in substrate binding. Residues aspartate 46, 105–108, 166–167, and 196–198 each bind ATP; these read EGAG, GS, and PEG. Positions 46 and 105 each coordinate Mg(2+).

Belongs to the dethiobiotin synthetase family. Homodimer. The cofactor is Mg(2+).

It localises to the cytoplasm. The enzyme catalyses (7R,8S)-7,8-diammoniononanoate + CO2 + ATP = (4R,5S)-dethiobiotin + ADP + phosphate + 3 H(+). The protein operates within cofactor biosynthesis; biotin biosynthesis; biotin from 7,8-diaminononanoate: step 1/2. Catalyzes a mechanistically unusual reaction, the ATP-dependent insertion of CO2 between the N7 and N8 nitrogen atoms of 7,8-diaminopelargonic acid (DAPA, also called 7,8-diammoniononanoate) to form a ureido ring. This Mycobacteroides abscessus (strain ATCC 19977 / DSM 44196 / CCUG 20993 / CIP 104536 / JCM 13569 / NCTC 13031 / TMC 1543 / L948) (Mycobacterium abscessus) protein is ATP-dependent dethiobiotin synthetase BioD.